Here is a 401-residue protein sequence, read N- to C-terminus: Secreted LysM effector Blys8 (401 aa).

A signal peptide spans 1–19; sequence MRTLAIFFIGAAVAAHVSP. Positions 42-89 constitute a LysM 1 domain; it reads TYYDEAYDKSYTCDDLLSAWVISKQDFESWNPAVGSDCKLVLGHSYCV. The segment covering 98–136 has biased composition (low complexity); that stretch reads STTTTTTTSTTTKTTTKTTTTTTAAPKPTSSAPSGPSPT. Residues 98–137 are disordered; it reads STTTTTTTSTTTKTTTKTTTTTTAAPKPTSSAPSGPSPTQ. The LysM 2 domain occupies 146–193; sequence AYYFVKAGDTCDKISQMYGTFSTAQFIEWNPAVGSSCTGLWAGYYYCV. The interval 201–223 is disordered; sequence SRTSTAGPTSTKPANGVTTPQPT. The region spanning 233–279 is the LysM 3 domain; the sequence is QFVYVQPGDQCGTVASRAGVSLSDFLQWNPSTGKDCSGLWANAYACV.

It belongs to the secreted LysM effector family.

Might have a role in sequestration of chitin oligosaccharides (breakdown products of fungal cell walls that are released during invasion and act as triggers of host immunity) to dampen host defense. The polypeptide is Secreted LysM effector Blys8 (Beauveria bassiana (strain ARSEF 2860) (White muscardine disease fungus)).